The following is a 488-amino-acid chain: UDP-N-acetylmuramoyl-L-alanyl-D-glutamate--2,6-diaminopimelate ligase (488 aa).

UDP-N-acetyl-alpha-D-muramoyl-L-alanyl-D-glutamate is bound by residues Leu24, Ser26, and 41-43 (HQV). Residue 113–119 (GTNGKTT) coordinates ATP. UDP-N-acetyl-alpha-D-muramoyl-L-alanyl-D-glutamate contacts are provided by residues Asn154, 155–156 (TT), Ser182, Gln188, and Arg190. Residue Lys222 is modified to N6-carboxylysine. Meso-2,6-diaminopimelate is bound by residues Arg386, 410–413 (DNPR), Gly461, and Glu465. Residues 410 to 413 (DNPR) carry the Meso-diaminopimelate recognition motif motif.

Belongs to the MurCDEF family. MurE subfamily. It depends on Mg(2+) as a cofactor. Carboxylation is probably crucial for Mg(2+) binding and, consequently, for the gamma-phosphate positioning of ATP.

Its subcellular location is the cytoplasm. It carries out the reaction UDP-N-acetyl-alpha-D-muramoyl-L-alanyl-D-glutamate + meso-2,6-diaminopimelate + ATP = UDP-N-acetyl-alpha-D-muramoyl-L-alanyl-gamma-D-glutamyl-meso-2,6-diaminopimelate + ADP + phosphate + H(+). Its pathway is cell wall biogenesis; peptidoglycan biosynthesis. Functionally, catalyzes the addition of meso-diaminopimelic acid to the nucleotide precursor UDP-N-acetylmuramoyl-L-alanyl-D-glutamate (UMAG) in the biosynthesis of bacterial cell-wall peptidoglycan. This is UDP-N-acetylmuramoyl-L-alanyl-D-glutamate--2,6-diaminopimelate ligase from Haemophilus influenzae (strain PittEE).